An 874-amino-acid polypeptide reads, in one-letter code: Protein Son (874 aa).

Disordered regions lie at residues 1-45, 68-98, and 120-368; these read MTEN…ERPD, RRSNSNELGNNDESGESESSASADDKKNIKP, and ELLD…SRDL. A compositionally biased stretch (polar residues) spans 12-24; sequence ETPQVAGSQTNPP. Residues 70–89 are compositionally biased toward low complexity; it reads SNSNELGNNDESGESESSAS. 2 stretches are compositionally biased toward basic residues: residues 128 to 147 and 162 to 175; these read KKKKKVKKEKKDKKAKKKKT and KHKHKRKKHKHKDI. Composition is skewed to basic and acidic residues over residues 176–219 and 226–277; these read RVKD…KDKF and SEKE…ERVR. In terms of domain architecture, G-patch spans 705–751; the sequence is TGGMGMALLQKMGWKPGEGLGRCKTGSLQPLLLDVKLDKRGLVSRDD. In terms of domain architecture, DRBM spans 800-870; that stretch reads HPVCVLNELT…AALCLRSLGI (71 aa).

In terms of tissue distribution, expressed in ovarian nurse cells (at protein level).

It localises to the nucleus. Its function is as follows. RNA-binding protein that protects nascent transcripts containing intronic transposable sequences, known as INE-1, from being degraded by DIP1. Modulates DIP1 activity by repressing its sumoylation levels. This ensures that intronic sequences will be degradated only after splicing. In the ovaries, regulates germline stem cells (GSCs) self-renewal by repressing the expression of the GSC differentiation-promoting factor Rga. This is Protein Son from Drosophila melanogaster (Fruit fly).